The following is a 1168-amino-acid chain: DNA-directed RNA polymerase subunit beta (1168 aa).

This sequence belongs to the RNA polymerase beta chain family. In terms of assembly, the RNAP catalytic core consists of 2 alpha, 1 beta, 1 beta' and 1 omega subunit. When a sigma factor is associated with the core the holoenzyme is formed, which can initiate transcription.

The catalysed reaction is RNA(n) + a ribonucleoside 5'-triphosphate = RNA(n+1) + diphosphate. Functionally, DNA-dependent RNA polymerase catalyzes the transcription of DNA into RNA using the four ribonucleoside triphosphates as substrates. The sequence is that of DNA-directed RNA polymerase subunit beta from Rhodococcus opacus (strain B4).